Here is a 170-residue protein sequence, read N- to C-terminus: Small ribosomal subunit protein uS4 (170 aa).

Positions 100–164 constitute an S4 RNA-binding domain; it reads RRLQTVVYRE…SDLTDELHPA (65 aa).

Belongs to the universal ribosomal protein uS4 family. As to quaternary structure, part of the 30S ribosomal subunit. Contacts protein S5. The interaction surface between S4 and S5 is involved in control of translational fidelity.

Its function is as follows. One of the primary rRNA binding proteins, it binds directly to 16S rRNA where it nucleates assembly of the body of the 30S subunit. In terms of biological role, with S5 and S12 plays an important role in translational accuracy. This Halobacterium salinarum (strain ATCC 29341 / DSM 671 / R1) protein is Small ribosomal subunit protein uS4.